Consider the following 460-residue polypeptide: Diguanylate cyclase DosC (460 aa).

Position 98 (H98) interacts with heme. One can recognise a GGDEF domain in the interval 325 to 458 (TPLSVLIIDV…GRNRVELWKA (134 aa)). Residue D333 participates in Mg(2+) binding. Substrate is bound by residues N341 and D350. D376 contacts Mg(2+). The Proton acceptor role is filled by D376.

Requires heme as cofactor. It depends on Mg(2+) as a cofactor.

The enzyme catalyses 2 GTP = 3',3'-c-di-GMP + 2 diphosphate. It functions in the pathway purine metabolism; 3',5'-cyclic di-GMP biosynthesis. Functionally, globin-coupled heme-based oxygen sensor protein displaying diguanylate cyclase (DGC) activity in response to oxygen availability. Thus, catalyzes the synthesis of cyclic diguanylate (c-di-GMP) via the condensation of 2 GTP molecules. Cyclic-di-GMP is a second messenger which controls cell surface-associated traits in bacteria. The sequence is that of Diguanylate cyclase DosC (dosC) from Escherichia coli O157:H7.